Consider the following 511-residue polypeptide: ADP,ATP carrier protein 4 (511 aa).

A run of 12 helical transmembrane segments spans residues 34–54 (VSKFLFITLLMFCILFIQNLI), 70–90 (IISFLKFWGVMPSAFLMTAIY), 102–122 (IFYLIISIFLTFFALFAYVIF), 157–177 (FSLFYIIAELWPNVVFALLFW), 192–212 (FYPLFGLLSQTGIYLAGQFLE), 231–251 (FHTLSIQIILTIVLILGIIAI), 296–316 (LIATLLICYGIAINLVEGPWK), 330–350 (AAFIGSYLSYTGVFTILFVVL), 361–381 (FTAAVITPLIVFITGILFFAV), 390–410 (LIIANFILTDPALIAITIGAI), 453–473 (LGKSGSAFLQSLVFIILPSAS), and 476–496 (SISTCLMIIFIITCLTWLWAT).

This sequence belongs to the ADP/ATP translocase tlc family.

The protein resides in the cell membrane. Provides the rickettsial cell with host ATP in exchange for rickettsial ADP. This is an obligate exchange system. This energy acquiring activity is an important component of rickettsial parasitism. In Rickettsia conorii (strain ATCC VR-613 / Malish 7), this protein is ADP,ATP carrier protein 4 (tlcD).